Consider the following 246-residue polypeptide: 3'(2'),5'-bisphosphate nucleotidase CysQ (246 aa).

Residues E64, D83, L85, D86, and D205 each contribute to the Mg(2+) site. E64 provides a ligand contact to substrate. Substrate is bound by residues 85–88 (LDGT) and D205.

Belongs to the inositol monophosphatase superfamily. CysQ family. Requires Mg(2+) as cofactor.

It localises to the cell inner membrane. It catalyses the reaction adenosine 3',5'-bisphosphate + H2O = AMP + phosphate. Functionally, converts adenosine-3',5'-bisphosphate (PAP) to AMP. The sequence is that of 3'(2'),5'-bisphosphate nucleotidase CysQ from Escherichia coli O6:H1 (strain CFT073 / ATCC 700928 / UPEC).